The primary structure comprises 763 residues: 5-methyltetrahydropteroyltriglutamate--homocysteine methyltransferase (763 aa).

5-methyltetrahydropteroyltri-L-glutamate-binding positions include 16–19 and Lys-114; that span reads RELK. L-homocysteine is bound by residues 438–440 and Glu-491; that span reads IGS. Residues 438 to 440 and Glu-491 each bind L-methionine; that span reads IGS. 5-methyltetrahydropteroyltri-L-glutamate is bound by residues 522-523 and Trp-568; that span reads RC. Position 606 (Asp-606) interacts with L-homocysteine. Residue Asp-606 participates in L-methionine binding. 5-methyltetrahydropteroyltri-L-glutamate is bound at residue Glu-612. The Zn(2+) site is built by His-648, Cys-650, and Glu-672. The Proton donor role is filled by His-701. Cys-733 lines the Zn(2+) pocket.

The protein belongs to the vitamin-B12 independent methionine synthase family. It depends on Zn(2+) as a cofactor.

The enzyme catalyses 5-methyltetrahydropteroyltri-L-glutamate + L-homocysteine = tetrahydropteroyltri-L-glutamate + L-methionine. It participates in amino-acid biosynthesis; L-methionine biosynthesis via de novo pathway; L-methionine from L-homocysteine (MetE route): step 1/1. In terms of biological role, catalyzes the transfer of a methyl group from 5-methyltetrahydrofolate to homocysteine resulting in methionine formation. The sequence is that of 5-methyltetrahydropteroyltriglutamate--homocysteine methyltransferase from Parvibaculum lavamentivorans (strain DS-1 / DSM 13023 / NCIMB 13966).